The following is a 390-amino-acid chain: VIRIPLHKFTSIRRTMSEAAGXVXXLIAKGPISKYATGEPAVRQGPIPELLKNYMDAQYYGEIGIGTPPQCFTVVFDTGSANLWVPSIHCKLLDIACWTHRKYNSDKSSTYVKNGTTFDIHYGSGSLSGYLSQDTVSVPCNPSSSSPGGVTVQRQTFGEAIKQPGVVFIAAKFDGILGMAYPRISVNNVLPVFDNLMQQKLVDKNVFSFFLNRDPKAQPGGELMLGGTDSKYYRGSLMFHNVTRQAYWQIHMDQLDVGSSLTVCKGGCEAIVDTGTSLIVGPVEEVRELQKAIGAVPLIQGEYMIPCEKVSSLPEVTVKLGGKDYALSPEDYALKVSQAETTVCLSGFMGMDIPPPGGPLWILGDVFIGRYYTVFDRDQNRVGLAEAARL.

Residues 1–44 constitute a propeptide, activation peptide; the sequence is VIRIPLHKFTSIRRTMSEAAGXVXXLIAKGPISKYATGEPAVRQ. The region spanning 59–385 is the Peptidase A1 domain; it reads YYGEIGIGTP…DRDQNRVGLA (327 aa). 2 cysteine pairs are disulfide-bonded: Cys71–Cys140 and Cys90–Cys97. Residue Asp77 is part of the active site. N-linked (GlcNAc...) asparagine glycans are attached at residues Asn114 and Asn241. The cysteines at positions 264 and 268 are disulfide-linked. The active site involves Asp273. A disulfide bridge connects residues Cys307 and Cys344.

This sequence belongs to the peptidase A1 family. Consists of a light chain and a heavy chain. Interacts with ADAM30; this leads to activation of CTSD. Interacts with GRN; stabilizes CTSD; increases its proteolytic activity. In terms of processing, N- and O-glycosylated. Post-translationally, undergoes proteolytic cleavage and activation by ADAM30.

Its subcellular location is the lysosome. It is found in the melanosome. It localises to the secreted. The protein resides in the extracellular space. The catalysed reaction is Specificity similar to, but narrower than, that of pepsin A. Does not cleave the 4-Gln-|-His-5 bond in B chain of insulin.. Its function is as follows. Acid protease active in intracellular protein breakdown. Plays a role in APP processing following cleavage and activation by ADAM30 which leads to APP degradation. In Bos taurus (Bovine), this protein is Cathepsin D (CTSD).